The chain runs to 235 residues: Large ribosomal subunit protein uL1 (235 aa).

This sequence belongs to the universal ribosomal protein uL1 family. In terms of assembly, part of the 50S ribosomal subunit.

Binds directly to 23S rRNA. The L1 stalk is quite mobile in the ribosome, and is involved in E site tRNA release. Its function is as follows. Protein L1 is also a translational repressor protein, it controls the translation of the L11 operon by binding to its mRNA. The polypeptide is Large ribosomal subunit protein uL1 (Prochlorococcus marinus (strain MIT 9301)).